The primary structure comprises 414 residues: Testis-specific Y-encoded-like protein 4 (414 aa).

Disordered stretches follow at residues 1 to 129 (MSGL…AGQK) and 391 to 414 (PRRGIRGPPRQPVESARSFRFQSG). The segment covering 24–40 (ASGDPDRDQCQGLREET) has biased composition (basic and acidic residues). Over residues 101–112 (EAASAAEAADSS) the composition is skewed to low complexity.

Belongs to the nucleosome assembly protein (NAP) family.

The polypeptide is Testis-specific Y-encoded-like protein 4 (TSPYL4) (Homo sapiens (Human)).